A 266-amino-acid polypeptide reads, in one-letter code: Phosphate import ATP-binding protein PstB 1 (266 aa).

Residues 18-261 enclose the ABC transporter domain; it reads AQTSNLSFYY…PTNQLTEQYV (244 aa). ATP is bound at residue 50–57; it reads GPSGCGKT.

The protein belongs to the ABC transporter superfamily. Phosphate importer (TC 3.A.1.7) family. The complex is composed of two ATP-binding proteins (PstB), two transmembrane proteins (PstC and PstA) and a solute-binding protein (PstS).

Its subcellular location is the cell inner membrane. The enzyme catalyses phosphate(out) + ATP + H2O = ADP + 2 phosphate(in) + H(+). Its function is as follows. Part of the ABC transporter complex PstSACB involved in phosphate import. Responsible for energy coupling to the transport system. This is Phosphate import ATP-binding protein PstB 1 from Gloeobacter violaceus (strain ATCC 29082 / PCC 7421).